The sequence spans 503 residues: Probable cytosol aminopeptidase (503 aa).

Mn(2+)-binding residues include Lys270 and Asp275. The active site involves Lys282. Mn(2+) contacts are provided by Asp293, Asp352, and Glu354. Arg356 is a catalytic residue.

It belongs to the peptidase M17 family. The cofactor is Mn(2+).

The protein localises to the cytoplasm. The catalysed reaction is Release of an N-terminal amino acid, Xaa-|-Yaa-, in which Xaa is preferably Leu, but may be other amino acids including Pro although not Arg or Lys, and Yaa may be Pro. Amino acid amides and methyl esters are also readily hydrolyzed, but rates on arylamides are exceedingly low.. The enzyme catalyses Release of an N-terminal amino acid, preferentially leucine, but not glutamic or aspartic acids.. Its function is as follows. Presumably involved in the processing and regular turnover of intracellular proteins. Catalyzes the removal of unsubstituted N-terminal amino acids from various peptides. The polypeptide is Probable cytosol aminopeptidase (Yersinia pseudotuberculosis serotype O:1b (strain IP 31758)).